A 209-amino-acid chain; its full sequence is MICOS complex subunit mic19 (209 aa).

Coiled coils occupy residues 48 to 86 (LELEIQNRVAKELERLRAREQQTLAEIEKRLSEAKDTGS) and 127 to 156 (EVAAVNKELNRESVNSEIEELRVKLEGRKK).

This sequence belongs to the MICOS complex subunit Mic19 family. Component of the mitochondrial contact site and cristae organizing system (MICOS) complex.

It is found in the mitochondrion inner membrane. In terms of biological role, component of the MICOS complex, a large protein complex of the mitochondrial inner membrane that plays crucial roles in the maintenance of crista junctions, inner membrane architecture, and formation of contact sites to the outer membrane. Involved in osmoadaptation. The polypeptide is MICOS complex subunit mic19 (Emericella nidulans (strain FGSC A4 / ATCC 38163 / CBS 112.46 / NRRL 194 / M139) (Aspergillus nidulans)).